We begin with the raw amino-acid sequence, 181 residues long: UPF0302 protein LMHCC_0635 (181 aa).

Belongs to the UPF0302 family.

In Listeria monocytogenes serotype 4a (strain HCC23), this protein is UPF0302 protein LMHCC_0635.